Reading from the N-terminus, the 424-residue chain is 3-phosphoshikimate 1-carboxyvinyltransferase (424 aa).

3-phosphoshikimate is bound by residues Lys-20, Ser-21, and Arg-25. Position 20 (Lys-20) interacts with phosphoenolpyruvate. Gly-92 and Arg-120 together coordinate phosphoenolpyruvate. Residues Ser-165, Gln-167, Asp-313, and Lys-340 each coordinate 3-phosphoshikimate. Residue Gln-167 coordinates phosphoenolpyruvate. Catalysis depends on Asp-313, which acts as the Proton acceptor. Phosphoenolpyruvate contacts are provided by Arg-344 and Arg-386.

The protein belongs to the EPSP synthase family. Monomer.

The protein resides in the cytoplasm. The catalysed reaction is 3-phosphoshikimate + phosphoenolpyruvate = 5-O-(1-carboxyvinyl)-3-phosphoshikimate + phosphate. The protein operates within metabolic intermediate biosynthesis; chorismate biosynthesis; chorismate from D-erythrose 4-phosphate and phosphoenolpyruvate: step 6/7. Its function is as follows. Catalyzes the transfer of the enolpyruvyl moiety of phosphoenolpyruvate (PEP) to the 5-hydroxyl of shikimate-3-phosphate (S3P) to produce enolpyruvyl shikimate-3-phosphate and inorganic phosphate. In Bacillus cytotoxicus (strain DSM 22905 / CIP 110041 / 391-98 / NVH 391-98), this protein is 3-phosphoshikimate 1-carboxyvinyltransferase.